The following is a 226-amino-acid chain: ATP synthase F(0) complex subunit a (226 aa).

The next 6 helical transmembrane spans lie at 11 to 31, 68 to 88, 97 to 117, 138 to 158, 164 to 184, and 189 to 209; these read APSMMGLPIVVLIVMFPSILF, WALMLMSLILFIGSTNLLGLL, QLSMNLGMAIPLWAGTVITGF, IPMLVVIETISLFIQPMALAV, ITAGHLLIHLIGGATLALINI, and AFITFIILILLTILEFAVALI.

This sequence belongs to the ATPase A chain family. Component of the ATP synthase complex composed at least of ATP5F1A/subunit alpha, ATP5F1B/subunit beta, ATP5MC1/subunit c (homooctomer), MT-ATP6/subunit a, MT-ATP8/subunit 8, ATP5ME/subunit e, ATP5MF/subunit f, ATP5MG/subunit g, ATP5MK/subunit k, ATP5MJ/subunit j, ATP5F1C/subunit gamma, ATP5F1D/subunit delta, ATP5F1E/subunit epsilon, ATP5PF/subunit F6, ATP5PB/subunit b, ATP5PD/subunit d, ATP5PO/subunit OSCP. ATP synthase complex consists of a soluble F(1) head domain (subunits alpha(3) and beta(3)) - the catalytic core - and a membrane F(0) domain - the membrane proton channel (subunits c, a, 8, e, f, g, k and j). These two domains are linked by a central stalk (subunits gamma, delta, and epsilon) rotating inside the F1 region and a stationary peripheral stalk (subunits F6, b, d, and OSCP). Interacts with DNAJC30; interaction is direct.

Its subcellular location is the mitochondrion inner membrane. It carries out the reaction H(+)(in) = H(+)(out). In terms of biological role, subunit a, of the mitochondrial membrane ATP synthase complex (F(1)F(0) ATP synthase or Complex V) that produces ATP from ADP in the presence of a proton gradient across the membrane which is generated by electron transport complexes of the respiratory chain. ATP synthase complex consist of a soluble F(1) head domain - the catalytic core - and a membrane F(1) domain - the membrane proton channel. These two domains are linked by a central stalk rotating inside the F(1) region and a stationary peripheral stalk. During catalysis, ATP synthesis in the catalytic domain of F(1) is coupled via a rotary mechanism of the central stalk subunits to proton translocation. With the subunit c (ATP5MC1), forms the proton-conducting channel in the F(0) domain, that contains two crucial half-channels (inlet and outlet) that facilitate proton movement from the mitochondrial intermembrane space (IMS) into the matrix. Protons are taken up via the inlet half-channel and released through the outlet half-channel, following a Grotthuss mechanism. The protein is ATP synthase F(0) complex subunit a of Canis lupus familiaris (Dog).